Consider the following 445-residue polypeptide: Methionine aminopeptidase 2-3 (445 aa).

The segment at 14–115 is disordered; that stretch reads ISDADANGAD…ENRYRTTSEE (102 aa). Acidic residues predominate over residues 38 to 47; the sequence is EDDDSDDDVA. The segment covering 60-75 has biased composition (basic residues); the sequence is AKKKKNKKRKPKKKQP. The span at 85-95 shows a compositional bias: polar residues; the sequence is PLSQLFPNNTY. A compositionally biased stretch (basic and acidic residues) spans 97–115; sequence KGEEVEYKDENRYRTTSEE. His198 contacts substrate. Asp218, Asp229, and His298 together coordinate a divalent metal cation. His306 contacts substrate. A divalent metal cation is bound by residues Glu331 and Glu426.

It belongs to the peptidase M24A family. Methionine aminopeptidase eukaryotic type 2 subfamily. It depends on Co(2+) as a cofactor. Zn(2+) serves as cofactor. Requires Mn(2+) as cofactor. The cofactor is Fe(2+).

The protein resides in the cytoplasm. The enzyme catalyses Release of N-terminal amino acids, preferentially methionine, from peptides and arylamides.. Cotranslationally removes the N-terminal methionine from nascent proteins. The N-terminal methionine is often cleaved when the second residue in the primary sequence is small and uncharged (Met-Ala-, Cys, Gly, Pro, Ser, Thr, or Val). This Neosartorya fischeri (strain ATCC 1020 / DSM 3700 / CBS 544.65 / FGSC A1164 / JCM 1740 / NRRL 181 / WB 181) (Aspergillus fischerianus) protein is Methionine aminopeptidase 2-3.